The chain runs to 885 residues: Probable LRR receptor-like serine/threonine-protein kinase At1g51820 (885 aa).

The signal sequence occupies residues 1–20 (MERHFVFIATYLLIFHLVQA). At 21–509 (QNQTGFISVD…GHKKKSVIVP (489 aa)) the chain is on the extracellular side. Asn22, Asn93, Asn135, Asn194, Asn228, Asn250, Asn254, Asn281, Asn287, Asn424, Asn437, Asn456, and Asn461 each carry an N-linked (GlcNAc...) asparagine glycan. LRR repeat units follow at residues 403-424 (IITS…AIKN), 427-447 (HLQI…EFLA), and 451-473 (SLLV…LLQK). A helical transmembrane segment spans residues 510–530 (VVASIASIAVLIGALVLFLIL). Residues 531-885 (RKKRSPKVEG…FGTEVSPNAR (355 aa)) lie on the Cytoplasmic side of the membrane. The Protein kinase domain maps to 578-851 (NNFQRILGKG…QVVIELNECL (274 aa)). Residues 584–592 (LGKGGFGMV) and Lys606 each bind ATP. Residue Tyr651 is modified to Phosphotyrosine. The active-site Proton acceptor is the Asp703. A Phosphoserine modification is found at Ser737. 2 positions are modified to phosphothreonine: Thr738 and Thr743. Tyr751 is modified (phosphotyrosine).

Belongs to the protein kinase superfamily. Ser/Thr protein kinase family.

Its subcellular location is the membrane. It carries out the reaction L-seryl-[protein] + ATP = O-phospho-L-seryl-[protein] + ADP + H(+). The enzyme catalyses L-threonyl-[protein] + ATP = O-phospho-L-threonyl-[protein] + ADP + H(+). This Arabidopsis thaliana (Mouse-ear cress) protein is Probable LRR receptor-like serine/threonine-protein kinase At1g51820.